The following is a 201-amino-acid chain: MISHFSGTVSAAGPTWVVLDNHGVGIKVLCPPATAASARINQDMSLHTSLVVREESLTLYGFVEADDRDAFELVQTASGVGPKLAAAIMSVLDAAQLATAITEEDDATLCRVPGIGRKGAAKMILELKDKVAALAPRGASASGATHVAAPWREQVAEGLVGLGWSTKDAEKAVDKVVALKEADPAMSIGNLMRAALRSLAR.

Residues 1–63 (MISHFSGTVS…EESLTLYGFV (63 aa)) are domain I. The domain II stretch occupies residues 64-142 (EADDRDAFEL…ALAPRGASAS (79 aa)). Residues 143–153 (GATHVAAPWRE) form a flexible linker region. Positions 153–201 (EQVAEGLVGLGWSTKDAEKAVDKVVALKEADPAMSIGNLMRAALRSLAR) are domain III.

It belongs to the RuvA family. In terms of assembly, homotetramer. Forms an RuvA(8)-RuvB(12)-Holliday junction (HJ) complex. HJ DNA is sandwiched between 2 RuvA tetramers; dsDNA enters through RuvA and exits via RuvB. An RuvB hexamer assembles on each DNA strand where it exits the tetramer. Each RuvB hexamer is contacted by two RuvA subunits (via domain III) on 2 adjacent RuvB subunits; this complex drives branch migration. In the full resolvosome a probable DNA-RuvA(4)-RuvB(12)-RuvC(2) complex forms which resolves the HJ.

Its subcellular location is the cytoplasm. Functionally, the RuvA-RuvB-RuvC complex processes Holliday junction (HJ) DNA during genetic recombination and DNA repair, while the RuvA-RuvB complex plays an important role in the rescue of blocked DNA replication forks via replication fork reversal (RFR). RuvA specifically binds to HJ cruciform DNA, conferring on it an open structure. The RuvB hexamer acts as an ATP-dependent pump, pulling dsDNA into and through the RuvAB complex. HJ branch migration allows RuvC to scan DNA until it finds its consensus sequence, where it cleaves and resolves the cruciform DNA. This Cutibacterium acnes (strain DSM 16379 / KPA171202) (Propionibacterium acnes) protein is Holliday junction branch migration complex subunit RuvA.